The primary structure comprises 519 residues: Cytochrome P450 4A22 (519 aa).

Residues 1-4 (MSVS) constitute a propeptide that is removed on maturation. Glu321 lines the heme pocket. Ser440 bears the Phosphoserine mark. Position 457 (Cys457) interacts with heme.

Belongs to the cytochrome P450 family.

The protein localises to the endoplasmic reticulum membrane. It localises to the microsome membrane. It carries out the reaction an omega-methyl-long-chain fatty acid + reduced [NADPH--hemoprotein reductase] + O2 = an omega-hydroxy-long-chain fatty acid + oxidized [NADPH--hemoprotein reductase] + H2O + H(+). Catalyzes the omega- and (omega-1)-hydroxylation of various fatty acids such as laurate and palmitate. Shows no activity towards arachidonic acid and prostaglandin A1. Lacks functional activity in the kidney and does not contribute to renal 20-hydroxyeicosatetraenoic acid (20-HETE) biosynthesis. The polypeptide is Cytochrome P450 4A22 (CYP4A22) (Homo sapiens (Human)).